We begin with the raw amino-acid sequence, 59 residues long: Large ribosomal subunit protein bL32 (59 aa).

The segment at 1 to 59 is disordered; it reads MAVQQNKKSPSKRGMHRSHDFLTNPPLAVEPTSGEIHLRHHVSPNGYYRGRKVLPAKGE. A compositionally biased stretch (basic residues) spans 49–59; sequence RGRKVLPAKGE.

Belongs to the bacterial ribosomal protein bL32 family.

This is Large ribosomal subunit protein bL32 from Methylobacillus flagellatus (strain ATCC 51484 / DSM 6875 / VKM B-1610 / KT).